The chain runs to 602 residues: DEAD-box ATP-dependent RNA helicase 53 (602 aa).

The span at 33–43 (ASPLDPCRGPA) shows a compositional bias: low complexity. The tract at residues 33 to 76 (ASPLDPCRGPAAPEPPRRRAFHGSPSPLGFRSTPASWSSPEAGA) is disordered. A Q motif motif is present at residues 84–112 (LEVARLGISPWIVERLAARGITRLFPIQR). Residues 115-288 (LDPAMQGKDM…SKYLKDPIII (174 aa)) enclose the Helicase ATP-binding domain. An ATP-binding site is contributed by 128 to 135 (ARTGTGKT). The short motif at 236–239 (DEAD) is the DEAD box element. The Helicase C-terminal domain maps to 317-462 (ILGPLIKEHA…LPKIEVADEA (146 aa)). Positions 503 to 602 (FGDFDGFGSS…GRSGGFDDSN (100 aa)) are disordered.

The protein belongs to the DEAD box helicase family. DDX21/DDX50 subfamily.

It catalyses the reaction ATP + H2O = ADP + phosphate + H(+). The sequence is that of DEAD-box ATP-dependent RNA helicase 53 from Oryza sativa subsp. japonica (Rice).